Here is a 228-residue protein sequence, read N- to C-terminus: Probable ribosomal RNA small subunit methyltransferase A (228 aa).

His-9, Leu-11, Gly-34, Glu-55, Asp-78, and Asn-93 together coordinate S-adenosyl-L-methionine.

The protein belongs to the class I-like SAM-binding methyltransferase superfamily. rRNA adenine N(6)-methyltransferase family. RsmA subfamily.

It localises to the cytoplasm. In terms of biological role, specifically dimethylates two adjacent adenosines in the loop of a conserved hairpin near the 3'-end of 16S rRNA in the 30S particle. May play a critical role in biogenesis of 30S subunits. This chain is Probable ribosomal RNA small subunit methyltransferase A, found in Pyrobaculum aerophilum (strain ATCC 51768 / DSM 7523 / JCM 9630 / CIP 104966 / NBRC 100827 / IM2).